Reading from the N-terminus, the 357-residue chain is MTTVSITFDLLSSMQPRKWLKNQNFVGEITSLSFDDSGELCLASCTDDTLQLYNCISGKFVKSLASKKYGAHLGRFTHHSNSLIHASTKEDNTVRYLDVVTNRYLRYFPGHKQTVTSIDVSPADETFLSASLDNTIRLWDLRSPNCQGLLNVSSPVVAAFDATGLIFASVSERKYKISLYNIKSFDARPFQDIPLTFLPPHVRIANVEFSTDGKYLLLTTGNDFHYVIDAYSGSELLRVPSKVSTKTQDGNLTYYASACMSPDSKFLFTSYDNEHLCMYQLPELKQTVNSDHIVNSFTEMGLASTTPTSNSHSTENPLAIIPSSTSKNLLPETPSIVRFNPRFSQLVTAHSGVIFWT.

4 WD repeats span residues 24–65 (NFVG…KSLA), 110–149 (GHKQ…CQGL), 199–241 (PPHV…RVPS), and 247–289 (TQDG…QTVN).

The protein belongs to the WD repeat SWD2 family. As to quaternary structure, component of the Set1 complex composed of ash2, sdc1, set1, shg1, spp1, swd1, swd2 and swd3.

The protein resides in the nucleus. The Set1 complex specifically methylates 'Lys-4' of histone H3. This chain is Set1 complex component swd2, found in Schizosaccharomyces pombe (strain 972 / ATCC 24843) (Fission yeast).